Consider the following 309-residue polypeptide: UDP-N-acetylenolpyruvoylglucosamine reductase (309 aa).

Positions 25 to 188 (RVGGPADWLF…TSVTLQGNRE (164 aa)) constitute an FAD-binding PCMH-type domain. Residue R168 is part of the active site. Residues 202–231 (AKRDATQPTKALTAGSTFRNPAGFSSTGQA) form a disordered region. A compositionally biased stretch (polar residues) spans 207–231 (TQPTKALTAGSTFRNPAGFSSTGQA). The active-site Proton donor is S217. The active site involves E299.

Belongs to the MurB family. FAD serves as cofactor.

Its subcellular location is the cytoplasm. It catalyses the reaction UDP-N-acetyl-alpha-D-muramate + NADP(+) = UDP-N-acetyl-3-O-(1-carboxyvinyl)-alpha-D-glucosamine + NADPH + H(+). It functions in the pathway cell wall biogenesis; peptidoglycan biosynthesis. Cell wall formation. The chain is UDP-N-acetylenolpyruvoylglucosamine reductase from Jannaschia sp. (strain CCS1).